The primary structure comprises 317 residues: Low affinity immunoglobulin gamma Fc region receptor II-a (317 aa).

An N-terminal signal peptide occupies residues 1-33 (MTMETQMSQNVCPRNLWLLQPLTVLLLLASADS). The Extracellular portion of the chain corresponds to 34-217 (QAAAPPKAVL…PSMGSSSPMG (184 aa)). 2 Ig-like C2-type domains span residues 39-118 (PKAV…VHLT) and 122-204 (EWLV…VTIT). 2 disulfides stabilise this stretch: Cys62-Cys104 and Cys143-Cys187. Asn97 and Asn178 each carry an N-linked (GlcNAc...) asparagine glycan. Residues 218 to 240 (IIVAVVIATAVAAIVAAVVALIY) traverse the membrane as a helical segment. At 241–317 (CRKKRISANS…PPNDHVNSNN (77 aa)) the chain is on the cytoplasmic side. A phosphotyrosine; by SRC-type Tyr-kinases mark is found at Tyr288 and Tyr304. Residues 292–317 (NPRAPTDDDKNIYLTLPPNDHVNSNN) are disordered.

As to quaternary structure, interacts with IGHG1. Interacts with INPP5D/SHIP1 and INPPL1/SHIP2, regulating its function. Interacts with APCS and FGR. Interacts with HCK. Post-translationally, phosphorylated by SRC-type Tyr-kinases such as LYN, BLK, FYN, HCK and SYK. As to expression, found on monocytes, neutrophils and eosinophil platelets.

It is found in the cell membrane. Binds to the Fc region of immunoglobulins gamma. Low affinity receptor. By binding to IgG it initiates cellular responses against pathogens and soluble antigens. Promotes phagocytosis of opsonized antigens. The protein is Low affinity immunoglobulin gamma Fc region receptor II-a (FCGR2A) of Homo sapiens (Human).